Here is a 274-residue protein sequence, read N- to C-terminus: MSFSGHTARKRFGQHWLRDARVLDQIVEAARLQQDDCVLEVGPGRGALTERLLASPAAQIHAIELDRDLVRGLHDRFGSESRFSLREGDVLEAPLHLVDGGFANKVVANIPYNITGPLLARLIGRLDRPVEPTYDCLVLLLQKEVAERIRAKPGRSSFSALSVRMQLLADCSLVCPVPPRCFQPPPKVQSEVILLKPFPPERRLPIDLASRVEALLKQAFQARRKMLRNTLAGVIDPQVLEPLAASVGISLQQRPQEVAAEAWVALARGLNQDV.

S-adenosyl-L-methionine is bound by residues His-15, Leu-17, Gly-42, Glu-64, Asp-89, and Asn-109.

Belongs to the class I-like SAM-binding methyltransferase superfamily. rRNA adenine N(6)-methyltransferase family. RsmA subfamily.

It is found in the cytoplasm. It carries out the reaction adenosine(1518)/adenosine(1519) in 16S rRNA + 4 S-adenosyl-L-methionine = N(6)-dimethyladenosine(1518)/N(6)-dimethyladenosine(1519) in 16S rRNA + 4 S-adenosyl-L-homocysteine + 4 H(+). Its function is as follows. Specifically dimethylates two adjacent adenosines (A1518 and A1519) in the loop of a conserved hairpin near the 3'-end of 16S rRNA in the 30S particle. May play a critical role in biogenesis of 30S subunits. The protein is Ribosomal RNA small subunit methyltransferase A of Synechococcus sp. (strain CC9902).